The primary structure comprises 444 residues: DNA primase DnaG (444 aa).

The 78-residue stretch at 173 to 250 folds into the Toprim domain; that stretch reads DAILIVEGRS…YVTRAPRGLE (78 aa). Mg(2+) is bound by residues Glu-179, Asp-221, and Asp-223. Positions 302–354 are disordered; the sequence is VTSSVNKTDKYSQKNESKQFKQQKNENKQVKDNSKEKTQKSTEKHNETEETHL. Residues 308–354 show a composition bias toward basic and acidic residues; the sequence is KTDKYSQKNESKQFKQQKNENKQVKDNSKEKTQKSTEKHNETEETHL.

Belongs to the archaeal DnaG primase family. As to quaternary structure, forms a ternary complex with MCM helicase and DNA. Component of the archaeal exosome complex. Requires Mg(2+) as cofactor.

It catalyses the reaction ssDNA + n NTP = ssDNA/pppN(pN)n-1 hybrid + (n-1) diphosphate.. In terms of biological role, RNA polymerase that catalyzes the synthesis of short RNA molecules used as primers for DNA polymerase during DNA replication. Also part of the exosome, which is a complex involved in RNA degradation. Acts as a poly(A)-binding protein that enhances the interaction between heteromeric, adenine-rich transcripts and the exosome. The polypeptide is DNA primase DnaG (Methanosphaera stadtmanae (strain ATCC 43021 / DSM 3091 / JCM 11832 / MCB-3)).